A 208-amino-acid polypeptide reads, in one-letter code: 3-demethoxyubiquinol 3-hydroxylase (208 aa).

Positions 57, 87, 90, 139, 171, and 174 each coordinate Fe cation.

This sequence belongs to the COQ7 family. Fe cation is required as a cofactor.

The protein localises to the cell membrane. The catalysed reaction is a 5-methoxy-2-methyl-3-(all-trans-polyprenyl)benzene-1,4-diol + AH2 + O2 = a 3-demethylubiquinol + A + H2O. The protein operates within cofactor biosynthesis; ubiquinone biosynthesis. Its function is as follows. Catalyzes the hydroxylation of 2-nonaprenyl-3-methyl-6-methoxy-1,4-benzoquinol during ubiquinone biosynthesis. The chain is 3-demethoxyubiquinol 3-hydroxylase from Burkholderia lata (strain ATCC 17760 / DSM 23089 / LMG 22485 / NCIMB 9086 / R18194 / 383).